A 193-amino-acid chain; its full sequence is dCTP deaminase (193 aa).

Residues 110–115 (RSSLAR), Asp128, 136–138 (VLE), Tyr171, Lys178, and Gln182 contribute to the dCTP site. Glu138 acts as the Proton donor/acceptor in catalysis.

It belongs to the dCTP deaminase family. Homotrimer.

It carries out the reaction dCTP + H2O + H(+) = dUTP + NH4(+). Its pathway is pyrimidine metabolism; dUMP biosynthesis; dUMP from dCTP (dUTP route): step 1/2. Functionally, catalyzes the deamination of dCTP to dUTP. The chain is dCTP deaminase from Buchnera aphidicola subsp. Baizongia pistaciae (strain Bp).